The following is a 199-amino-acid chain: Charged multivesicular body protein 1B2 (199 aa).

The stretch at 15-47 (AKELNRNAKKCDKEEKAEKAKIKKAIQKGNTEV) forms a coiled coil. The segment at 132–156 (MEDTMSSTTTLTTPQNQVDMLLQEM) is interaction with IST1. A disordered region spans residues 167-199 (ELPQGQTGSVGASVASTEQDELSQRLARLRDQV). Over residues 170–183 (QGQTGSVGASVAST) the composition is skewed to polar residues. The interval 174–199 (GSVGASVASTEQDELSQRLARLRDQV) is interaction with SPAST. The stretch at 177-199 (GASVASTEQDELSQRLARLRDQV) forms a coiled coil. The tract at residues 180-196 (VASTEQDELSQRLARLR) is interaction with VPS4A, MITD1 and STAMBP. The tract at residues 180–199 (VASTEQDELSQRLARLRDQV) is interaction with VTA1. The tract at residues 183–199 (TEQDELSQRLARLRDQV) is interaction with VPS4B. The MIT-interacting motif signature appears at 186 to 196 (DELSQRLARLR).

The protein belongs to the SNF7 family. In terms of assembly, probable peripherally associated component of the endosomal sorting required for transport complex III (ESCRT-III). ESCRT-III components are thought to multimerize to form a flat lattice on the perimeter membrane of the endosome. Several assembly forms of ESCRT-III may exist that interact and act sequentially. Interacts with CHMP1A. Interacts with VTA1; the interaction probably involves the open conformation of CHMP1B. Interacts with CHMP2A. Interacts with VPS4A; the interaction is direct. Interacts with VPS4B; the interaction is direct. Interacts with SPAST (via MIT domain); the interaction is direct. Interacts with IST1. Interacts with MITD1. Interacts with STAMBP.

It is found in the cytoplasm. The protein localises to the cytosol. Its subcellular location is the endosome. The protein resides in the late endosome membrane. Its function is as follows. Probable peripherally associated component of the endosomal sorting required for transport complex III (ESCRT-III) which is involved in multivesicular bodies (MVBs) formation and sorting of endosomal cargo proteins into MVBs. MVBs contain intraluminal vesicles (ILVs) that are generated by invagination and scission from the limiting membrane of the endosome and mostly are delivered to lysosomes enabling degradation of membrane proteins, such as stimulated growth factor receptors, lysosomal enzymes and lipids. The MVB pathway appears to require the sequential function of ESCRT-O, -I,-II and -III complexes. ESCRT-III proteins mostly dissociate from the invaginating membrane before the ILV is released. The ESCRT machinery also functions in topologically equivalent membrane fission events, such as the terminal stages of cytokinesis. ESCRT-III proteins are believed to mediate the necessary vesicle extrusion and/or membrane fission activities, possibly in conjunction with the AAA ATPase VPS4. Involved in cytokinesis. Involved in recruiting VPS4A and/or VPS4B and SPAST to the midbody of dividing cells. The protein is Charged multivesicular body protein 1B2 of Mus musculus (Mouse).